The chain runs to 1701 residues: Merozoite surface protein 1 (1701 aa).

Residues 1–19 (MKIIFFLCSFLFFIINTQC) form the signal peptide. Over residues 89-100 (GSGGSVASGGSG) the composition is skewed to gly residues. Residues 89–118 (GSGGSVASGGSGNSRRTNPSDNSSDSNTKT) form a disordered region. The span at 101–116 (NSRRTNPSDNSSDSNT) shows a compositional bias: low complexity. N-linked (GlcNAc...) asparagine glycosylation is found at Asn110 and Asn239. Positions 322 to 344 (DAENPTTGSKPNPLPENKKKEVE) are disordered. Residues Asn470, Asn536, and Asn607 are each glycosylated (N-linked (GlcNAc...) asparagine). The tract at residues 704–739 (SETTEDGGHSTHTLSQSGETEVTEETEVTEETVGHT) is disordered. Residues 724 to 733 (EVTEETEVTE) are compositionally biased toward acidic residues. Residues Asn802, Asn899, Asn919, Asn965, Asn991, Asn1089, and Asn1196 are each glycosylated (N-linked (GlcNAc...) asparagine). Positions 889–927 (TGTSSTSSPGNTTVNTAQSATHSNSQNQQSNASSTNTQN) are enriched in low complexity. The interval 889 to 936 (TGTSSTSSPGNTTVNTAQSATHSNSQNQQSNASSTNTQNGVAVSSGPA) is disordered. Disordered stretches follow at residues 1230-1259 (TPPQPDVTPSPLSVRVSGSSGSTKEETQIP) and 1451-1472 (KEKFPSSPPTTPPSPAKTDEQK). The span at 1245-1259 (VSGSSGSTKEETQIP) shows a compositional bias: polar residues. Positions 1456–1465 (SSPPTTPPSP) are enriched in pro residues. Asn1588 carries N-linked (GlcNAc...) asparagine glycosylation. 2 EGF-like domains span residues 1592 to 1632 (HQCV…VENP) and 1633 to 1680 (NPTC…IFCS). 6 disulfide bridges follow: Cys1594–Cys1605, Cys1599–Cys1615, Cys1617–Cys1628, Cys1636–Cys1649, Cys1643–Cys1663, and Cys1665–Cys1679. Ser1680 is lipidated: GPI-anchor amidated serine. Positions 1681–1701 (SSNFLGISFLLILMLILYSFI) are cleaved as a propeptide — removed in mature form.

In terms of assembly, forms a complex composed of subunits p83, p30, p38, and p42 which remain non-covalently associated; the complex is formed at the merozoite surface prior to egress from host erythrocytes. Forms a complex composed of processed MSP1 subunits, MSP6 subunit p36 and MSP7; the complex is formed at the merozoite surface prior to egress from host erythrocytes. Within the complex, interacts (via subunit p38) with MSP6 subunit p36 and (via subunits p83, p30 and p38) with MSP7 (via subunit p22). Forms a complex composed of MSP1, MSP6, DBLMSP1 and DBLMSP2. Within the complex, interacts (via subunit p38) with DBLMSP1 and DBLMSP2. Forms a complex composed of MSP1, and rhoptry proteins RhopH3, RAP1 and CLAG9/RhopH3. Within the complex, interacts (via subunits p42 and p19) with RhopH3 (via C-terminus). Forms a complex composed of MSP1, MSP6, MSP7, MSP9 and MSP3; within the complex, MSP6 and MSP9 mediate the binding to the host erythrocyte. Interacts (via subunits p19 and p42) with MSP9; the interaction is direct; MSP1 subunits p19 or p42, and MSP9 form a co-ligand complex that interacts with host SLC4A1/Band 3 protein. May interact with PFD6. Interacts with host spectrin. Interacts with host glycophorin GYPA in a sialic acid-independent manner. As to quaternary structure, interacts with host proinflammatory cytokine S100P; the interaction blocks S100P inflammatory and chemotactic activities. In terms of assembly, interacts with host SLC4A1/Band 3 (via 5ABC region) on the host erythrocyte surface in a sialic acid-independent manner. Post-translationally, the p190 precursor is cleaved by SUB1 prior to merozoite egress into 4 subunits p83, p30, p38, and p42 which remain non-covalently associated. SUB1-mediated proteolytic cleavage occurs in an orderly manner; the first cleavage occurs at the p30/p38 site, followed by cleavage at the p83/p30 site, the last cleavage occurs at the p38/p42 site. The order of cleavage is essential for parasite viability. SUB1-mediated processing is essential for merozoite egress. In a second processing step during erythrocyte invasion, p42 is cleaved by SUB2 into p33 and p19; the latter remains attached to the merozoite surface via its GPI-anchor and is endocytosed during the subsequent ring stage.

Its subcellular location is the cell membrane. The protein localises to the secreted. It is found in the vacuole membrane. Functionally, during the asexual blood stage, involved in merozoite egress from host erythrocytes possibly via its interaction with the host cytoskeleton protein spectrin resulting in the destabilization of the host cytoskeleton and thus leading to erythrocyte cell membrane rupture. Involved in the binding to host erythrocytes and is required for host erythrocyte invasion. In terms of biological role, by binding to host proinflammatory cytokine S100P may interfere with host immune responses. Its function is as follows. Involved in merozoite invasion of host erythrocytes. May play a role in the biogenesis and/or function of the food vacuole during the intraerythrocytic development. The polypeptide is Merozoite surface protein 1 (Plasmodium falciparum (isolate mad20 / Papua New Guinea)).